Consider the following 295-residue polypeptide: MQPSPTHRASFSIGSEAAARRVVDVLTEVFFEGDAAVAAFERPDGQWDVTLHFADAPDQAWLRELVVNSAGNEIADTLAFDTVEAKDWVKASLEDLVPVPAGRFVVHGSHDRDRVAPNKLKIEIEAALAFGTGHHGTTRGCLLLLDHVLKSSRPSNVLDLGTGTGVLAIAAAKALHRAVLASDIDPPSVRVAAENGRLNEVGHHVRVIRATGFAAPDFARAGPFDLVLANILANPLRHLASPMARHLAPGARVILSGLLTHQAPAVIAAYRARGLVPLRHLRIEGWSSLLLRKVG.

S-adenosyl-L-methionine-binding residues include Thr138, Gly161, Asp183, and Asn230.

The protein belongs to the methyltransferase superfamily. PrmA family.

Its subcellular location is the cytoplasm. It catalyses the reaction L-lysyl-[protein] + 3 S-adenosyl-L-methionine = N(6),N(6),N(6)-trimethyl-L-lysyl-[protein] + 3 S-adenosyl-L-homocysteine + 3 H(+). Functionally, methylates ribosomal protein L11. This is Ribosomal protein L11 methyltransferase from Bradyrhizobium diazoefficiens (strain JCM 10833 / BCRC 13528 / IAM 13628 / NBRC 14792 / USDA 110).